A 144-amino-acid chain; its full sequence is Giant hemoglobins B chain (144 aa).

In terms of domain architecture, Globin spans 3–144 (VCGPLQRLKV…LNVITNGIQG (142 aa)). His96 contacts heme b.

This sequence belongs to the globin family. Part of giant hemoglobin C1, V1 and V2. This worm has three different extracellular Hbs: two dissolved in the vascular blood, V1 (CA. 3,500 kDa) and V2 (CA. 400 kDa), and one in the coelomic fluid, C1 (CA. 400 kDa). V1 consists of four heme-containing, globin chains (B-E) and four linker chains (L1-L4). V2 consists of six globin chains (A-F) and C1 consists of five globin chains (A-E).

It localises to the secreted. The protein resides in the extracellular space. The protein is Giant hemoglobins B chain of Riftia pachyptila (Vent tube worm).